The chain runs to 337 residues: S-adenosylmethionine:tRNA ribosyltransferase-isomerase (337 aa).

It belongs to the QueA family. Monomer.

It localises to the cytoplasm. The enzyme catalyses 7-aminomethyl-7-carbaguanosine(34) in tRNA + S-adenosyl-L-methionine = epoxyqueuosine(34) in tRNA + adenine + L-methionine + 2 H(+). It functions in the pathway tRNA modification; tRNA-queuosine biosynthesis. In terms of biological role, transfers and isomerizes the ribose moiety from AdoMet to the 7-aminomethyl group of 7-deazaguanine (preQ1-tRNA) to give epoxyqueuosine (oQ-tRNA). In Legionella pneumophila (strain Corby), this protein is S-adenosylmethionine:tRNA ribosyltransferase-isomerase.